The chain runs to 189 residues: Putative OVARIAN TUMOR DOMAIN-containing deubiquitinating enzyme 8 (189 aa).

One can recognise an OTU domain in the interval 1 to 103; it reads MMKSDGNCQF…GIHFNSIYKK (103 aa). D5 is an active-site residue. The active-site Nucleophile is the C8. H96 is an active-site residue. The interval 105-189 is disordered; that stretch reads KEKGSRSSSS…NRNHHFHYSE (85 aa). The stretch at 120–181 forms a coiled coil; the sequence is WMKLQRKKEN…KKEKKEKKNR (62 aa). Short sequence motifs (nuclear localization signal) lie at residues 125–132 and 163–170; these read RKKENEAK and KKKAKVQK. Residues 126–174 are compositionally biased toward basic and acidic residues; the sequence is KKENEAKKKEEEEKERKDMEKEEKKKDKEDKKKDKEDKKKAKVQKEKKE. Residues 175-189 show a composition bias toward basic residues; the sequence is KKEKKNRNHHFHYSE.

The protein belongs to the peptidase C85 family.

The protein localises to the nucleus. The enzyme catalyses Thiol-dependent hydrolysis of ester, thioester, amide, peptide and isopeptide bonds formed by the C-terminal Gly of ubiquitin (a 76-residue protein attached to proteins as an intracellular targeting signal).. Its function is as follows. Hydrolase that can remove conjugated ubiquitin from proteins in vitro and may therefore play an important regulatory role at the level of protein turnover by preventing degradation. This is Putative OVARIAN TUMOR DOMAIN-containing deubiquitinating enzyme 8 from Arabidopsis thaliana (Mouse-ear cress).